The primary structure comprises 719 residues: Fatty acid oxidation complex subunit alpha (719 aa).

The segment at 1-190 (MVYQGNRITV…KLGLVDATVA (190 aa)) is enoyl-CoA hydratase/isomerase. Asp298 contributes to the substrate binding site. The segment at 313 to 719 (HEINEAAVLG…AAGETFYATA (407 aa)) is 3-hydroxyacyl-CoA dehydrogenase. NAD(+)-binding positions include Met326, Asp345, 402–404 (VVE), Lys409, and Ser431. The active-site For 3-hydroxyacyl-CoA dehydrogenase activity is His452. Position 455 (Asn455) interacts with NAD(+). Substrate is bound at residue Asn502.

This sequence in the N-terminal section; belongs to the enoyl-CoA hydratase/isomerase family. In the C-terminal section; belongs to the 3-hydroxyacyl-CoA dehydrogenase family. Heterotetramer of two alpha chains (FadB) and two beta chains (FadA).

It carries out the reaction a (3S)-3-hydroxyacyl-CoA + NAD(+) = a 3-oxoacyl-CoA + NADH + H(+). The catalysed reaction is a (3S)-3-hydroxyacyl-CoA = a (2E)-enoyl-CoA + H2O. It catalyses the reaction a 4-saturated-(3S)-3-hydroxyacyl-CoA = a (3E)-enoyl-CoA + H2O. The enzyme catalyses (3S)-3-hydroxybutanoyl-CoA = (3R)-3-hydroxybutanoyl-CoA. It carries out the reaction a (3Z)-enoyl-CoA = a 4-saturated (2E)-enoyl-CoA. The catalysed reaction is a (3E)-enoyl-CoA = a 4-saturated (2E)-enoyl-CoA. It functions in the pathway lipid metabolism; fatty acid beta-oxidation. In terms of biological role, involved in the aerobic and anaerobic degradation of long-chain fatty acids via beta-oxidation cycle. Catalyzes the formation of 3-oxoacyl-CoA from enoyl-CoA via L-3-hydroxyacyl-CoA. It can also use D-3-hydroxyacyl-CoA and cis-3-enoyl-CoA as substrate. The protein is Fatty acid oxidation complex subunit alpha of Psychrobacter arcticus (strain DSM 17307 / VKM B-2377 / 273-4).